A 95-amino-acid polypeptide reads, in one-letter code: Large ribosomal subunit protein uL23 (95 aa).

The protein belongs to the universal ribosomal protein uL23 family. As to quaternary structure, part of the 50S ribosomal subunit. Contacts protein L29, and trigger factor when it is bound to the ribosome.

Its function is as follows. One of the early assembly proteins it binds 23S rRNA. One of the proteins that surrounds the polypeptide exit tunnel on the outside of the ribosome. Forms the main docking site for trigger factor binding to the ribosome. The chain is Large ribosomal subunit protein uL23 from Desulfotalea psychrophila (strain LSv54 / DSM 12343).